The primary structure comprises 504 residues: Maturase K (504 aa).

It belongs to the intron maturase 2 family. MatK subfamily.

The protein resides in the plastid. It is found in the chloroplast. Functionally, usually encoded in the trnK tRNA gene intron. Probably assists in splicing its own and other chloroplast group II introns. This Turritis glabra (Tower mustard) protein is Maturase K.